We begin with the raw amino-acid sequence, 316 residues long: ATP synthase gamma chain (316 aa).

It belongs to the ATPase gamma chain family. F-type ATPases have 2 components, CF(1) - the catalytic core - and CF(0) - the membrane proton channel. CF(1) has five subunits: alpha(3), beta(3), gamma(1), delta(1), epsilon(1). CF(0) has three main subunits: a, b and c.

It is found in the cellular thylakoid membrane. In terms of biological role, produces ATP from ADP in the presence of a proton gradient across the membrane. The gamma chain is believed to be important in regulating ATPase activity and the flow of protons through the CF(0) complex. The polypeptide is ATP synthase gamma chain (Prochlorococcus marinus (strain MIT 9211)).